The primary structure comprises 161 residues: uncharacterized protein (161 aa).

The segment at residues 1–23 (MKKFAFLTALFAACYLPNAYAHA) is a signal peptide (or 21). A helical transmembrane segment spans residues 129 to 149 (IYLHDILGGIGYIVGIAGLIA).

The protein localises to the membrane. This is an uncharacterized protein from Haemophilus influenzae (strain ATCC 51907 / DSM 11121 / KW20 / Rd).